The primary structure comprises 399 residues: Bifunctional enzyme IspD/IspF (399 aa).

The interval 1-239 (MHTWALLLAA…SSEKKNMQVP (239 aa)) is 2-C-methyl-D-erythritol 4-phosphate cytidylyltransferase. The 2-C-methyl-D-erythritol 2,4-cyclodiphosphate synthase stretch occupies residues 240 to 399 (CVGWGYDVHR…AVTALRRVSS (160 aa)). 2 residues coordinate a divalent metal cation: Asp-246 and His-248. 4-CDP-2-C-methyl-D-erythritol 2-phosphate contacts are provided by residues 246-248 (DVH) and 273-274 (HS). An a divalent metal cation-binding site is contributed by His-281. 4-CDP-2-C-methyl-D-erythritol 2-phosphate contacts are provided by residues 295-297 (DIG), 300-304 (FPDTD), 371-374 (TTEE), and Phe-378.

The protein in the N-terminal section; belongs to the IspD/TarI cytidylyltransferase family. IspD subfamily. It in the C-terminal section; belongs to the IspF family. The cofactor is a divalent metal cation.

The enzyme catalyses 2-C-methyl-D-erythritol 4-phosphate + CTP + H(+) = 4-CDP-2-C-methyl-D-erythritol + diphosphate. It carries out the reaction 4-CDP-2-C-methyl-D-erythritol 2-phosphate = 2-C-methyl-D-erythritol 2,4-cyclic diphosphate + CMP. It participates in isoprenoid biosynthesis; isopentenyl diphosphate biosynthesis via DXP pathway; isopentenyl diphosphate from 1-deoxy-D-xylulose 5-phosphate: step 2/6. The protein operates within isoprenoid biosynthesis; isopentenyl diphosphate biosynthesis via DXP pathway; isopentenyl diphosphate from 1-deoxy-D-xylulose 5-phosphate: step 4/6. Functionally, bifunctional enzyme that catalyzes the formation of 4-diphosphocytidyl-2-C-methyl-D-erythritol from CTP and 2-C-methyl-D-erythritol 4-phosphate (MEP) (IspD), and catalyzes the conversion of 4-diphosphocytidyl-2-C-methyl-D-erythritol 2-phosphate (CDP-ME2P) to 2-C-methyl-D-erythritol 2,4-cyclodiphosphate (ME-CPP) with a corresponding release of cytidine 5-monophosphate (CMP) (IspF). The sequence is that of Bifunctional enzyme IspD/IspF from Oleidesulfovibrio alaskensis (strain ATCC BAA-1058 / DSM 17464 / G20) (Desulfovibrio alaskensis).